We begin with the raw amino-acid sequence, 353 residues long: Photosystem II protein D1 (353 aa).

Position 2 is an N-acetylthreonine (threonine 2). At threonine 2 the chain carries Phosphothreonine. The next 3 membrane-spanning stretches (helical) occupy residues 29–46, 118–133, and 142–156; these read YIGW…TATS, HFLL…EWEL, and WIAV…AATA. Histidine 118 is a binding site for chlorophyll a. Tyrosine 126 is a binding site for pheophytin a. The [CaMn4O5] cluster site is built by aspartate 170 and glutamate 189. A helical membrane pass occupies residues 197-218; the sequence is FHMLGVAGVFGGSLFSAMHGSL. A chlorophyll a-binding site is contributed by histidine 198. Residues histidine 215 and 264-265 contribute to the a quinone site; that span reads SF. Histidine 215 contacts Fe cation. Histidine 272 contacts Fe cation. A helical transmembrane segment spans residues 274-288; that stretch reads FLAAWPVVGIWFTAL. [CaMn4O5] cluster-binding residues include histidine 332, glutamate 333, aspartate 342, and alanine 344. A propeptide spanning residues 345–353 is cleaved from the precursor; that stretch reads SIEAPLVNG.

The protein belongs to the reaction center PufL/M/PsbA/D family. As to quaternary structure, PSII is composed of 1 copy each of membrane proteins PsbA, PsbB, PsbC, PsbD, PsbE, PsbF, PsbH, PsbI, PsbJ, PsbK, PsbL, PsbM, PsbT, PsbX, PsbY, PsbZ, Psb30/Ycf12, at least 3 peripheral proteins of the oxygen-evolving complex and a large number of cofactors. It forms dimeric complexes. Requires The D1/D2 heterodimer binds P680, chlorophylls that are the primary electron donor of PSII, and subsequent electron acceptors. It shares a non-heme iron and each subunit binds pheophytin, quinone, additional chlorophylls, carotenoids and lipids. D1 provides most of the ligands for the Mn4-Ca-O5 cluster of the oxygen-evolving complex (OEC). There is also a Cl(-1) ion associated with D1 and D2, which is required for oxygen evolution. The PSII complex binds additional chlorophylls, carotenoids and specific lipids. as cofactor. Tyr-161 forms a radical intermediate that is referred to as redox-active TyrZ, YZ or Y-Z. Post-translationally, C-terminally processed by CTPA; processing is essential to allow assembly of the oxygen-evolving complex and thus photosynthetic growth.

Its subcellular location is the plastid. It is found in the chloroplast thylakoid membrane. It carries out the reaction 2 a plastoquinone + 4 hnu + 2 H2O = 2 a plastoquinol + O2. Its function is as follows. Photosystem II (PSII) is a light-driven water:plastoquinone oxidoreductase that uses light energy to abstract electrons from H(2)O, generating O(2) and a proton gradient subsequently used for ATP formation. It consists of a core antenna complex that captures photons, and an electron transfer chain that converts photonic excitation into a charge separation. The D1/D2 (PsbA/PsbD) reaction center heterodimer binds P680, the primary electron donor of PSII as well as several subsequent electron acceptors. The chain is Photosystem II protein D1 from Psilotum nudum (Whisk fern).